A 25-amino-acid chain; its full sequence is Toxin Tpa3 (25 aa).

This sequence belongs to the non-disulfide-bridged peptide (NDBP) superfamily. Expressed by the venom gland.

The protein resides in the secreted. In terms of biological role, unknown. Is not toxic to mammals. In Tityus pachyurus (Colombian scorpion), this protein is Toxin Tpa3.